The primary structure comprises 228 residues: 2,3-bisphosphoglycerate-dependent phosphoglycerate mutase (228 aa).

Residues 8–15 (RHGQSAWN), 21–22 (TG), Arg-60, 87–90 (ERHY), Lys-98, 114–115 (RR), and 180–181 (GN) contribute to the substrate site. The active-site Tele-phosphohistidine intermediate is His-9. Glu-87 serves as the catalytic Proton donor/acceptor.

It belongs to the phosphoglycerate mutase family. BPG-dependent PGAM subfamily. In terms of assembly, homodimer.

It carries out the reaction (2R)-2-phosphoglycerate = (2R)-3-phosphoglycerate. The protein operates within carbohydrate degradation; glycolysis; pyruvate from D-glyceraldehyde 3-phosphate: step 3/5. In terms of biological role, catalyzes the interconversion of 2-phosphoglycerate and 3-phosphoglycerate. This chain is 2,3-bisphosphoglycerate-dependent phosphoglycerate mutase, found in Rhizorhabdus wittichii (strain DSM 6014 / CCUG 31198 / JCM 15750 / NBRC 105917 / EY 4224 / RW1) (Sphingomonas wittichii).